The following is a 565-amino-acid chain: NAD-dependent malic enzyme (565 aa).

Tyr104 acts as the Proton donor in catalysis. Residue Arg157 coordinates NAD(+). Residue Lys175 is the Proton acceptor of the active site. Glu246, Asp247, and Asp270 together coordinate a divalent metal cation. 2 residues coordinate NAD(+): Asp270 and Asn418.

The protein belongs to the malic enzymes family. In terms of assembly, homotetramer. Requires Mg(2+) as cofactor. Mn(2+) is required as a cofactor.

The enzyme catalyses (S)-malate + NAD(+) = pyruvate + CO2 + NADH. It catalyses the reaction oxaloacetate + H(+) = pyruvate + CO2. This chain is NAD-dependent malic enzyme, found in Proteus mirabilis (strain HI4320).